Consider the following 526-residue polypeptide: Peptide chain release factor 3 (526 aa).

Positions 9-277 (NKRRTFAIIS…DFVEYAPGPQ (269 aa)) constitute a tr-type G domain. Residues 18 to 25 (SHPDAGKT), 86 to 90 (DTPGH), and 140 to 143 (NKLD) contribute to the GTP site.

Belongs to the TRAFAC class translation factor GTPase superfamily. Classic translation factor GTPase family. PrfC subfamily.

The protein localises to the cytoplasm. In terms of biological role, increases the formation of ribosomal termination complexes and stimulates activities of RF-1 and RF-2. It binds guanine nucleotides and has strong preference for UGA stop codons. It may interact directly with the ribosome. The stimulation of RF-1 and RF-2 is significantly reduced by GTP and GDP, but not by GMP. The polypeptide is Peptide chain release factor 3 (Legionella pneumophila (strain Lens)).